The sequence spans 517 residues: Xaa-Pro dipeptidase (517 aa).

Positions 244, 255, 336, 381, and 420 each coordinate Mn(2+).

It belongs to the peptidase M24B family. Bacterial-type prolidase subfamily. In terms of assembly, monomer. Requires Mn(2+) as cofactor.

It carries out the reaction Xaa-L-Pro dipeptide + H2O = an L-alpha-amino acid + L-proline. The catalysed reaction is diisopropyl fluorophosphate + H2O = diisopropyl phosphate + fluoride + 2 H(+). It catalyses the reaction An aryl dialkyl phosphate + H2O = dialkyl phosphate + an aryl alcohol.. Splits dipeptides with a prolyl or hydroxyprolyl residue in the C-terminal position and a nonpolar amino acid at the N-terminal position. Also catalyzes the hydrolysis of toxic organophosphorus cholinesterase-inhibiting compounds including insecticide paraoxon and nerve gases such as diisopropylfluorophosphate (DFP), O-isopropyl methylphosphonofluoridate (sarin), O-pinacolyl methylphosphonofluoridate (soman), and O-cyclohexyl methylphosphonofluoridate. The protein is Xaa-Pro dipeptidase (pepQ) of Alteromonas sp.